Here is a 357-residue protein sequence, read N- to C-terminus: Peptide chain release factor 1 (357 aa).

N5-methylglutamine is present on glutamine 234.

The protein belongs to the prokaryotic/mitochondrial release factor family. Methylated by PrmC. Methylation increases the termination efficiency of RF1.

It is found in the cytoplasm. In terms of biological role, peptide chain release factor 1 directs the termination of translation in response to the peptide chain termination codons UAG and UAA. The protein is Peptide chain release factor 1 of Arthrobacter sp. (strain FB24).